Here is a 910-residue protein sequence, read N- to C-terminus: Staphylococcal nuclease domain-containing protein 1 (910 aa).

A2 carries the post-translational modification N-acetylalanine. TNase-like domains follow at residues 18 to 166, 193 to 328, and 341 to 496; these read TVQR…MWSE, KPVN…IWRD, and KQFV…LHSK. Phosphothreonine is present on T103. An N6-acetyllysine modification is found at K193. At T240 the chain carries Phosphothreonine. Short sequence motifs (nuclear localization signal) lie at residues 321–325 and 388–392; these read RRLRI and KKLRP. Position 426 is a phosphoserine (S426). K513 is covalently cross-linked (Glycyl lysine isopeptide (Lys-Gly) (interchain with G-Cter in SUMO2)). The 136-residue stretch at 525 to 660 folds into the TNase-like 4 domain; the sequence is GRSEAVVEYV…KQKKEKVWAH (136 aa). K641 bears the N6-acetyllysine mark. Position 645 is a phosphoserine (S645). The Tudor domain occupies 729–787; it reads APRRGEFCIAKFVDGEWYRARVEKVESPAKVHVFYIDYGNREILPSTRLGTLPPAFSTR. T779 bears the Phosphothreonine mark. Phosphoserine is present on residues S785 and S909.

Forms a ternary complex with STAT6 and POLR2A. Associates with the RNA-induced silencing complex (RISC). Interacts with the RISC components AGO2, FMR1 and TNRC6A. Interacts with GTF2E1 and GTF2E2. Interacts with PIM1. Interacts with STAT5. Interacts with SYT11 (via C2 2 domain); the interaction with SYT11 is direct. In terms of processing, phosphorylated by PIM1 in vitro. In lactating cows highly expressed in mammary epithelial cells.

The protein resides in the cytoplasm. Its subcellular location is the nucleus. The protein localises to the melanosome. The enzyme catalyses Endonucleolytic cleavage to nucleoside 3'-phosphates and 3'-phosphooligonucleotide end-products.. In terms of biological role, endonuclease that mediates miRNA decay of both protein-free and AGO2-loaded miRNAs. As part of its function in miRNA decay, regulates mRNAs involved in G1-to-S phase transition. Functions as a bridging factor between STAT6 and the basal transcription factor. Plays a role in PIM1 regulation of MYB activity. Functions as a transcriptional coactivator for STAT5. In Bos taurus (Bovine), this protein is Staphylococcal nuclease domain-containing protein 1 (SND1).